A 209-amino-acid chain; its full sequence is Methylthioribulose-1-phosphate dehydratase (209 aa).

Zn(2+) contacts are provided by His99 and His101.

It belongs to the aldolase class II family. MtnB subfamily. Zn(2+) serves as cofactor.

It catalyses the reaction 5-(methylsulfanyl)-D-ribulose 1-phosphate = 5-methylsulfanyl-2,3-dioxopentyl phosphate + H2O. The protein operates within amino-acid biosynthesis; L-methionine biosynthesis via salvage pathway; L-methionine from S-methyl-5-thio-alpha-D-ribose 1-phosphate: step 2/6. In terms of biological role, catalyzes the dehydration of methylthioribulose-1-phosphate (MTRu-1-P) into 2,3-diketo-5-methylthiopentyl-1-phosphate (DK-MTP-1-P). This Leptospira biflexa serovar Patoc (strain Patoc 1 / Ames) protein is Methylthioribulose-1-phosphate dehydratase.